The sequence spans 517 residues: GMP synthase [glutamine-hydrolyzing] (517 aa).

The region spanning 11 to 202 is the Glutamine amidotransferase type-1 domain; it reads KIIVLDFGSQ…AFDVCGAKDN (192 aa). The active-site Nucleophile is Cys-88. Residues His-176 and Glu-178 contribute to the active site. Positions 203-392 constitute a GMPS ATP-PPase domain; sequence WTMDDFIKLS…LGLPHDLVWR (190 aa). Residue 230-236 coordinates ATP; it reads SGGVDSS.

Homodimer.

It catalyses the reaction XMP + L-glutamine + ATP + H2O = GMP + L-glutamate + AMP + diphosphate + 2 H(+). Its pathway is purine metabolism; GMP biosynthesis; GMP from XMP (L-Gln route): step 1/1. Its function is as follows. Catalyzes the synthesis of GMP from XMP. This Lactobacillus delbrueckii subsp. bulgaricus (strain ATCC 11842 / DSM 20081 / BCRC 10696 / JCM 1002 / NBRC 13953 / NCIMB 11778 / NCTC 12712 / WDCM 00102 / Lb 14) protein is GMP synthase [glutamine-hydrolyzing].